A 515-amino-acid chain; its full sequence is Proline--tRNA ligase (515 aa).

The protein belongs to the class-II aminoacyl-tRNA synthetase family. ProS type 3 subfamily. Homodimer.

It localises to the cytoplasm. It carries out the reaction tRNA(Pro) + L-proline + ATP = L-prolyl-tRNA(Pro) + AMP + diphosphate. Functionally, catalyzes the attachment of proline to tRNA(Pro) in a two-step reaction: proline is first activated by ATP to form Pro-AMP and then transferred to the acceptor end of tRNA(Pro). The protein is Proline--tRNA ligase of Novosphingobium aromaticivorans (strain ATCC 700278 / DSM 12444 / CCUG 56034 / CIP 105152 / NBRC 16084 / F199).